The following is a 924-amino-acid chain: Nodulation receptor kinase (924 aa).

Positions methionine 1–serine 29 are cleaved as a signal peptide. Residues glutamate 361–serine 382 are a coiled coil. LRR repeat units lie at residues valine 406–methionine 428, lysine 430–serine 452, leucine 453–leucine 475, and histidine 477–asparagine 498. Residues phenylalanine 520–phenylalanine 540 form a helical membrane-spanning segment. The 278-residue stretch at glutamate 595 to isoleucine 872 folds into the Protein kinase domain. ATP-binding positions include isoleucine 601–valine 609 and lysine 623. The Proton acceptor role is filled by aspartate 721.

The protein belongs to the protein kinase superfamily. Ser/Thr protein kinase family. Post-translationally, may be phosphorylated.

It localises to the membrane. It carries out the reaction L-seryl-[protein] + ATP = O-phospho-L-seryl-[protein] + ADP + H(+). The catalysed reaction is L-threonyl-[protein] + ATP = O-phospho-L-threonyl-[protein] + ADP + H(+). In terms of biological role, involved in the perception of symbiotic fungi and bacteria and required for the calcium spiking. Part of the perception/transduction system leading to nodulation or mycorrhizal infection. In Pisum sativum (Garden pea), this protein is Nodulation receptor kinase (NORK).